Reading from the N-terminus, the 161-residue chain is Allophycocyanin beta chain (161 aa).

N71 carries the N4-methylasparagine modification. Position 81 (C81) interacts with (2R,3E)-phycocyanobilin.

The protein belongs to the phycobiliprotein family. Heterodimer of an alpha and a beta chain. Post-translationally, contains one covalently linked phycocyanobilin chromophore.

It is found in the cellular thylakoid membrane. Functionally, light-harvesting photosynthetic bile pigment-protein from the phycobiliprotein complex. Allophycocyanin has a maximum absorption at approximately 650 nanometers. The chain is Allophycocyanin beta chain (apcB) from Anabaena cylindrica.